A 926-amino-acid chain; its full sequence is ABC transporter A family member 6 (926 aa).

6 consecutive transmembrane segments (helical) span residues 34–54, 336–356, 389–409, 418–438, 451–471, and 525–545; these read LIVIPLYLCVVLVCIQAVFDS, ASLIGPIFFTWVILLLFPVIL, FLAISTLYIVCLMIFGSAIGL, TIQFMFYFLYINLQISIAFLV, VAYIYVFGSGLLGAFLFQFLI, and DEVFTIIIVEWVVALVATYYI. The 238-residue stretch at 610-847 folds into the ABC transporter domain; that stretch reads IVCDNLKKVY…YGGSYVLTIT (238 aa). 648–655 is a binding site for ATP; sequence GPNGAGKT.

The protein belongs to the ABC transporter superfamily. ABCA family. CPR flippase (TC 3.A.1.211) subfamily.

It localises to the membrane. This Arabidopsis thaliana (Mouse-ear cress) protein is ABC transporter A family member 6 (ABCA6).